We begin with the raw amino-acid sequence, 174 residues long: Peptide methionine sulfoxide reductase MsrA (174 aa).

Residue Cys-10 is part of the active site.

This sequence belongs to the MsrA Met sulfoxide reductase family.

The catalysed reaction is L-methionyl-[protein] + [thioredoxin]-disulfide + H2O = L-methionyl-(S)-S-oxide-[protein] + [thioredoxin]-dithiol. The enzyme catalyses [thioredoxin]-disulfide + L-methionine + H2O = L-methionine (S)-S-oxide + [thioredoxin]-dithiol. Its function is as follows. Has an important function as a repair enzyme for proteins that have been inactivated by oxidation. Catalyzes the reversible oxidation-reduction of methionine sulfoxide in proteins to methionine. This chain is Peptide methionine sulfoxide reductase MsrA, found in Paenarthrobacter aurescens (strain TC1).